The primary structure comprises 634 residues: Probable potassium transport system protein Kup (634 aa).

A run of 12 helical transmembrane segments spans residues 21–41, 58–78, 110–130, 148–168, 180–200, 217–237, 258–278, 296–316, 348–368, 377–397, 408–428, and 432–452; these read IILS…LYTL, VLGI…IKYV, IYIV…DGII, PHMK…LFLC, FGPI…YNII, FFLE…LAVT, WMYV…ALVL, GLYP…QALI, IYVP…VIGF, AYGV…IIYA, LLMI…ANII, and DGAW…RTWL.

The protein belongs to the HAK/KUP transporter (TC 2.A.72) family.

Its subcellular location is the cell inner membrane. It carries out the reaction K(+)(in) + H(+)(in) = K(+)(out) + H(+)(out). In terms of biological role, transport of potassium into the cell. Likely operates as a K(+):H(+) symporter. The sequence is that of Probable potassium transport system protein Kup from Xylella fastidiosa (strain Temecula1 / ATCC 700964).